A 450-amino-acid polypeptide reads, in one-letter code: MSHRYIPLTEKDKKEMLDKIGASSINELFGDVPKDILLNRDLNIASGEAETSLLRRLNTVANKNVTKETHASFLGAGVYDHYAPAVVDAMISRSEFYTAYTPYQPEISQGELQAIFEFQTLICELTDMDVANSSMYDGITSFAEACILAFNHTKKNKIVVSKGLHYQALQVLKTYVKVREEFEIVEVDLDGTITDLEKLEQAVDDETAAVAVQYPNFYGSVEDLEKIQSFIEGKKALFIVYANPLALGLLTPPGSFGADIVVGDTQPFGIPTQFGGPHCGYFATTKKLMRKVPGRLVGQTQDDEGNRGFVLTLQAREQHIRRDKATSNICSNQALNALASSIAMSALGKQGIYDIAVQNLEHANYAKNQFKDNGFEVLDGTSFNEFVVKFDQPIKDINKKLAKHGFIGGFDLGEASADFENHMLIAVTELRTKDEIDTFVKKAGELNGSK.

Belongs to the GcvP family. N-terminal subunit subfamily. The glycine cleavage system is composed of four proteins: P, T, L and H. In this organism, the P 'protein' is a heterodimer of two subunits.

It carries out the reaction N(6)-[(R)-lipoyl]-L-lysyl-[glycine-cleavage complex H protein] + glycine + H(+) = N(6)-[(R)-S(8)-aminomethyldihydrolipoyl]-L-lysyl-[glycine-cleavage complex H protein] + CO2. In terms of biological role, the glycine cleavage system catalyzes the degradation of glycine. The P protein binds the alpha-amino group of glycine through its pyridoxal phosphate cofactor; CO(2) is released and the remaining methylamine moiety is then transferred to the lipoamide cofactor of the H protein. The protein is Probable glycine dehydrogenase (decarboxylating) subunit 1 of Staphylococcus haemolyticus (strain JCSC1435).